The primary structure comprises 98 residues: NADH-ubiquinone oxidoreductase chain 4L (98 aa).

3 consecutive transmembrane segments (helical) span residues 1-21 (MTSINLNLMTAFLLALAGVLM), 28-48 (STLLCLEGMMLSLYIMLSLLI), and 59-79 (APLILLVISACEAAGGLALLV).

Belongs to the complex I subunit 4L family. Core subunit of respiratory chain NADH dehydrogenase (Complex I) which is composed of 45 different subunits.

Its subcellular location is the mitochondrion inner membrane. The catalysed reaction is a ubiquinone + NADH + 5 H(+)(in) = a ubiquinol + NAD(+) + 4 H(+)(out). In terms of biological role, core subunit of the mitochondrial membrane respiratory chain NADH dehydrogenase (Complex I) which catalyzes electron transfer from NADH through the respiratory chain, using ubiquinone as an electron acceptor. Part of the enzyme membrane arm which is embedded in the lipid bilayer and involved in proton translocation. The protein is NADH-ubiquinone oxidoreductase chain 4L (MT-ND4L) of Phascolarctos cinereus (Koala).